The following is a 175-amino-acid chain: Sec-independent protein translocase protein TatB (175 aa).

The helical transmembrane segment at M1–G21 threads the bilayer. Low complexity predominate over residues S94 to G115. Disordered stretches follow at residues S94–S118 and V153–L175. The segment covering V160–L175 has biased composition (basic residues).

It belongs to the TatB family. In terms of assembly, the Tat system comprises two distinct complexes: a TatABC complex, containing multiple copies of TatA, TatB and TatC subunits, and a separate TatA complex, containing only TatA subunits. Substrates initially bind to the TatABC complex, which probably triggers association of the separate TatA complex to form the active translocon.

It is found in the cell inner membrane. Its function is as follows. Part of the twin-arginine translocation (Tat) system that transports large folded proteins containing a characteristic twin-arginine motif in their signal peptide across membranes. Together with TatC, TatB is part of a receptor directly interacting with Tat signal peptides. TatB may form an oligomeric binding site that transiently accommodates folded Tat precursor proteins before their translocation. In Burkholderia pseudomallei (strain 1106a), this protein is Sec-independent protein translocase protein TatB.